Reading from the N-terminus, the 330-residue chain is Trans-1,2-dihydrobenzene-1,2-diol dehydrogenase (330 aa).

Belongs to the Gfo/Idh/MocA family. As to quaternary structure, homodimer.

The enzyme catalyses (1R,2R)-1,2-dihydrobenzene-1,2-diol + NADP(+) = catechol + NADPH + H(+). It carries out the reaction D-xylose + NADP(+) = D-xylono-1,5-lactone + NADPH + H(+). This Xenopus laevis (African clawed frog) protein is Trans-1,2-dihydrobenzene-1,2-diol dehydrogenase (dhdh).